Reading from the N-terminus, the 155-residue chain is Movement protein TGB3 (155 aa).

Over 1–59 (MAMPHPLECCCPQCLPSSESFPIYGEQEIPCSETQAETTPVEKTVRANVLTDILDDHYY) the chain is Cytoplasmic. A helical transmembrane segment spans residues 60-80 (AILASLFIIALWLLYIYLSSI). The Lumenal portion of the chain corresponds to 81–130 (PTETGPYFYQDLNSVKIYGIGATNPEVIAAIHHWQKYPFGESPMWGGLIS). The Involved in plasmodesmata targeting and virus cell-to-cell movement motif lies at 89-93 (YQDLN). Residues 131–151 (VLSILLKPLTLVFALSFFLLL) form a helical membrane-spanning segment. Positions 150–155 (LLSSKR) are required for attachment to the host plasmodesmata-associated membrane compartments. The Cytoplasmic segment spans residues 152 to 155 (SSKR).

The protein belongs to the virgaviridae TGB3 movement protein family. Interacts with movement proteins TGB1 and TGB2. TGB1-TGB3-TGB2 complex formation is enhanced by ATP hydrolysis.

The protein resides in the host cell junction. Its subcellular location is the host plasmodesma. It is found in the host endoplasmic reticulum membrane. It localises to the host cytoplasm. The protein localises to the host cytoskeleton. Functionally, participates in the transport of viral genome to neighboring plant cells directly through plasmodesmata, without any budding. TGBp2 and TGBp3 are necessary for intracellular delivery of TGBp1-containing vRNPs to plasmodesmata. Can gate plasmodesmata and increase their size exclusion limit. Induces host actin cytoskeleton network thickening, which probably plays a major role in virus cell-to-cell movement. The polypeptide is Movement protein TGB3 (Hordeum vulgare (Barley)).